A 278-amino-acid polypeptide reads, in one-letter code: Potassium/proton antiporter CemA (278 aa).

The next 4 membrane-spanning stretches (helical) occupy residues isoleucine 61 to glycine 81, alanine 155 to threonine 175, isoleucine 203 to isoleucine 223, and phenylalanine 238 to isoleucine 258.

This sequence belongs to the CemA family.

Its subcellular location is the plastid. The protein localises to the chloroplast inner membrane. It catalyses the reaction K(+)(in) + H(+)(out) = K(+)(out) + H(+)(in). Functionally, contributes to K(+)/H(+) antiport activity by supporting proton efflux to control proton extrusion and homeostasis in chloroplasts in a light-dependent manner to modulate photosynthesis. Prevents excessive induction of non-photochemical quenching (NPQ) under continuous-light conditions. Indirectly promotes efficient inorganic carbon uptake into chloroplasts. The chain is Potassium/proton antiporter CemA from Porphyra purpurea (Red seaweed).